Consider the following 40-residue polypeptide: Toxin CSTX-17 (40 aa).

4 cysteine pairs are disulfide-bonded: cysteine 2–cysteine 17, cysteine 9–cysteine 22, cysteine 16–cysteine 33, and cysteine 24–cysteine 31. Position 40 is a tryptophan amide (tryptophan 40).

Post-translationally, contains 4 disulfide bonds. Expressed by the venom gland.

The protein localises to the secreted. The sequence is that of Toxin CSTX-17 from Cupiennius salei (American wandering spider).